We begin with the raw amino-acid sequence, 172 residues long: Early nodulin-like protein 17 (172 aa).

A signal peptide spans 1 to 26 (MARFTVLITAVVLAFLMAAPMPGVTA). Residues 27-127 (KKYTVGENKF…GMKLSVKVEK (101 aa)) form the Phytocyanin domain. N-linked (GlcNAc...) asparagine glycosylation is found at asparagine 42, asparagine 73, asparagine 88, and asparagine 101. Cysteine 80 and cysteine 115 are joined by a disulfide. Glycine 141 carries GPI-anchor amidated glycine lipidation. Positions 142–172 (SVSMVTGLAQFMIPVSLFAFPAMWDVISRMW) are cleaved as a propeptide — removed in mature form.

Belongs to the early nodulin-like (ENODL) family.

The protein localises to the cell membrane. Functionally, may act as a carbohydrate transporter. This is Early nodulin-like protein 17 from Arabidopsis thaliana (Mouse-ear cress).